The primary structure comprises 754 residues: 1,4-alpha-glucan branching enzyme GlgB (754 aa).

Aspartate 431 serves as the catalytic Nucleophile. Glutamate 484 (proton donor) is an active-site residue.

This sequence belongs to the glycosyl hydrolase 13 family. GlgB subfamily. In terms of assembly, monomer.

The enzyme catalyses Transfers a segment of a (1-&gt;4)-alpha-D-glucan chain to a primary hydroxy group in a similar glucan chain.. The protein operates within glycan biosynthesis; glycogen biosynthesis. Functionally, catalyzes the formation of the alpha-1,6-glucosidic linkages in glycogen by scission of a 1,4-alpha-linked oligosaccharide from growing alpha-1,4-glucan chains and the subsequent attachment of the oligosaccharide to the alpha-1,6 position. This chain is 1,4-alpha-glucan branching enzyme GlgB, found in Prochlorococcus marinus (strain MIT 9515).